The chain runs to 383 residues: 8-amino-7-oxononanoate synthase (383 aa).

Arginine 22 is a substrate binding site. Pyridoxal 5'-phosphate is bound at residue 109–110; it reads GF. A substrate-binding site is contributed by histidine 134. The pyridoxal 5'-phosphate site is built by serine 178, histidine 206, and threonine 232. Lysine 235 carries the post-translational modification N6-(pyridoxal phosphate)lysine. Residue threonine 348 participates in substrate binding.

It belongs to the class-II pyridoxal-phosphate-dependent aminotransferase family. BioF subfamily. Homodimer. Pyridoxal 5'-phosphate serves as cofactor.

It catalyses the reaction 6-carboxyhexanoyl-[ACP] + L-alanine + H(+) = (8S)-8-amino-7-oxononanoate + holo-[ACP] + CO2. It participates in cofactor biosynthesis; biotin biosynthesis. In terms of biological role, catalyzes the decarboxylative condensation of pimeloyl-[acyl-carrier protein] and L-alanine to produce 8-amino-7-oxononanoate (AON), [acyl-carrier protein], and carbon dioxide. The polypeptide is 8-amino-7-oxononanoate synthase (Vibrio parahaemolyticus serotype O3:K6 (strain RIMD 2210633)).